Consider the following 631-residue polypeptide: PTS system glucosamine-specific EIICBA component (631 aa).

The 380-residue stretch at 3 to 382 folds into the PTS EIIC type-1 domain; the sequence is KKAFQILQQL…WNLKTPGRET (380 aa). 8 helical membrane-spanning segments follow: residues 12-32, 56-76, 106-126, 149-169, 196-216, 243-263, 298-318, and 350-370; these read LGRALMTPVAVLPAAGLLLRF, LIFAVGVAIGLAGGEGVAGLA, HLIDMGVFGGIIIGLLAAYLY, IITSVSSLVIGVIFSFVWPLI, LLIPFGLHHIFYTPFYFMMGE, FMMGDFPYMIFCLPAVALAII, FLFVAPVLYLINSILAGVIFV, and VVIPVGIVFAFIYYYLFRFAI. Residues 397–478 enclose the PTS EIIB type-1 domain; that stretch reads DQLAFHVLQA…KTIMAGGVPA (82 aa). Residue Cys-419 is the Phosphocysteine intermediate; for EIIB activity of the active site. Residue Cys-419 is modified to Phosphocysteine. A PTS EIIA type-1 domain is found at 515–619; that stretch reads DQVFSEKMMG…SAITPVIFTN (105 aa). His-567 serves as the catalytic Tele-phosphohistidine intermediate; for EIIA activity. Phosphohistidine is present on His-567.

It is found in the cell membrane. The catalysed reaction is D-glucosamine(out) + N(pros)-phospho-L-histidyl-[protein] = D-glucosamine 6-phosphate(in) + L-histidyl-[protein]. Its function is as follows. The phosphoenolpyruvate-dependent sugar phosphotransferase system (sugar PTS), a major carbohydrate active transport system, catalyzes the phosphorylation of incoming sugar substrates concomitantly with their translocation across the cell membrane. This system is involved in glucosamine transport. In vitro, when expressed in the absence of GamR and NagP, can transport N-acetylglucosamine. In addition, plays an important role in the phosphorylation of EIIA-deficient PTS transporters. The EIIA domain can transfer a phosphoryl group to EIIA-deficient PTS transporters, enabling growth with maltose, N-acetylglucosamine, sucrose or trehalose as the sole carbon source. The polypeptide is PTS system glucosamine-specific EIICBA component (Bacillus subtilis (strain 168)).